Here is a 475-residue protein sequence, read N- to C-terminus: ATP synthase subunit beta, chloroplastic (475 aa).

156-163 (GGAGVGKT) serves as a coordination point for ATP.

This sequence belongs to the ATPase alpha/beta chains family. In terms of assembly, F-type ATPases have 2 components, CF(1) - the catalytic core - and CF(0) - the membrane proton channel. CF(1) has five subunits: alpha(3), beta(3), gamma(1), delta(1), epsilon(1). CF(0) has four main subunits: a(1), b(1), b'(1) and c(9-12).

It is found in the plastid. Its subcellular location is the chloroplast thylakoid membrane. It carries out the reaction ATP + H2O + 4 H(+)(in) = ADP + phosphate + 5 H(+)(out). Functionally, produces ATP from ADP in the presence of a proton gradient across the membrane. The catalytic sites are hosted primarily by the beta subunits. The protein is ATP synthase subunit beta, chloroplastic of Gracilaria tenuistipitata var. liui (Red alga).